A 330-amino-acid polypeptide reads, in one-letter code: N-acetyl-gamma-glutamyl-phosphate reductase (330 aa).

The active site involves Cys155.

Belongs to the NAGSA dehydrogenase family. Type 1 subfamily.

The protein localises to the cytoplasm. It catalyses the reaction N-acetyl-L-glutamate 5-semialdehyde + phosphate + NADP(+) = N-acetyl-L-glutamyl 5-phosphate + NADPH + H(+). Its pathway is amino-acid biosynthesis; L-arginine biosynthesis; N(2)-acetyl-L-ornithine from L-glutamate: step 3/4. Catalyzes the NADPH-dependent reduction of N-acetyl-5-glutamyl phosphate to yield N-acetyl-L-glutamate 5-semialdehyde. This chain is N-acetyl-gamma-glutamyl-phosphate reductase, found in Shewanella halifaxensis (strain HAW-EB4).